We begin with the raw amino-acid sequence, 479 residues long: Anaerobic nitric oxide reductase flavorubredoxin (479 aa).

Residues 30 to 210 are zinc metallo-hydrolase; sequence LRGSSYNSYL…PFSRLVTPKI (181 aa). Residues His-79, Glu-81, Asp-83, His-147, Asp-166, and His-227 each coordinate Fe cation. Residues 254 to 393 enclose the Flavodoxin-like domain; that stretch reads ITIFYDTMSN…LCRQHGRDIA (140 aa). FMN contacts are provided by residues 260–264 and 342–369; these read TMSNN and AFGS…EMSL. A Rubredoxin-like domain is found at 423 to 474; it reads GPKMQCSVCQWIYDPALGEPLQDVAPGTPWSDVPDNFLCPECSLGKDVFDVL. Positions 428, 431, 461, and 464 each coordinate Fe cation.

The protein in the N-terminal section; belongs to the zinc metallo-hydrolase group 3 family. In terms of assembly, homotetramer. It depends on Fe cation as a cofactor. FMN serves as cofactor.

Its subcellular location is the cytoplasm. Its pathway is nitrogen metabolism; nitric oxide reduction. Its function is as follows. Anaerobic nitric oxide reductase; uses NADH to detoxify nitric oxide (NO), protecting several 4Fe-4S NO-sensitive enzymes. Has at least 2 reductase partners, only one of which (NorW, flavorubredoxin reductase) has been identified. NO probably binds to the di-iron center; electrons enter from the NorW at rubredoxin and are transferred sequentially to the FMN center and the di-iron center. Also able to function as an aerobic oxygen reductase. In Salmonella typhi, this protein is Anaerobic nitric oxide reductase flavorubredoxin.